Here is a 378-residue protein sequence, read N- to C-terminus: Lipid-A-disaccharide synthase (378 aa).

It belongs to the LpxB family.

It catalyses the reaction a lipid X + a UDP-2-N,3-O-bis[(3R)-3-hydroxyacyl]-alpha-D-glucosamine = a lipid A disaccharide + UDP + H(+). Its pathway is bacterial outer membrane biogenesis; LPS lipid A biosynthesis. In terms of biological role, condensation of UDP-2,3-diacylglucosamine and 2,3-diacylglucosamine-1-phosphate to form lipid A disaccharide, a precursor of lipid A, a phosphorylated glycolipid that anchors the lipopolysaccharide to the outer membrane of the cell. The protein is Lipid-A-disaccharide synthase of Pseudomonas aeruginosa (strain LESB58).